A 290-amino-acid chain; its full sequence is 4-diphosphocytidyl-2-C-methyl-D-erythritol kinase (290 aa).

The active site involves lysine 11. 97–107 (PVAAGIGGGSS) contacts ATP. Aspartate 139 is a catalytic residue.

The protein belongs to the GHMP kinase family. IspE subfamily.

The enzyme catalyses 4-CDP-2-C-methyl-D-erythritol + ATP = 4-CDP-2-C-methyl-D-erythritol 2-phosphate + ADP + H(+). The protein operates within isoprenoid biosynthesis; isopentenyl diphosphate biosynthesis via DXP pathway; isopentenyl diphosphate from 1-deoxy-D-xylulose 5-phosphate: step 3/6. Its function is as follows. Catalyzes the phosphorylation of the position 2 hydroxy group of 4-diphosphocytidyl-2C-methyl-D-erythritol. In Methylobacterium radiotolerans (strain ATCC 27329 / DSM 1819 / JCM 2831 / NBRC 15690 / NCIMB 10815 / 0-1), this protein is 4-diphosphocytidyl-2-C-methyl-D-erythritol kinase.